The chain runs to 161 residues: MQDAITAVINSADVQGKYLDGAAMDKLKNYFASGELRVRAASVISANAATIVKEAVAKSLLYSDVTRPGGNMYTTRRYAACIRDLDYYLRYATYAMLAGDASILDERVLNGLKETYNSLGVPISSTVQAIQAIKEVTASLVGADAGKEMGVYLDYICSGLS.

N71 bears the N4-methylasparagine mark. C81 contributes to the (2R,3E)-phycocyanobilin binding site.

The protein belongs to the phycobiliprotein family. As to quaternary structure, heterodimer of an alpha and a beta chain. Post-translationally, contains one covalently linked phycocyanobilin chromophore.

It localises to the cellular thylakoid membrane. Its function is as follows. Light-harvesting photosynthetic bile pigment-protein from the phycobiliprotein complex. Allophycocyanin has a maximum absorption at approximately 650 nanometers. The protein is Allophycocyanin beta chain (apcB) of Synechocystis sp. (strain PCC 6714) (Aphanocapsa sp. (strain PCC 6714)).